The sequence spans 116 residues: Mercuric transport protein MerT (116 aa).

2 helical membrane passes run 16-36 (LAAI…ALGF) and 46-66 (VLEP…FFAW). Residues C24 and C25 each contribute to the Hg(2+) site. The Hg(2+) site is built by C76 and C82. A helical membrane pass occupies residues 94-114 (IFWVVAALVLVALGFPYVMPF).

It belongs to the MerT family.

Its subcellular location is the cell inner membrane. In terms of biological role, involved in mercury resistance. Probably transfers a mercuric ion from the periplasmic Hg(2+)-binding protein MerP to the cytoplasmic mercuric reductase MerA. In Serratia marcescens, this protein is Mercuric transport protein MerT.